The following is a 151-amino-acid chain: Nucleoside diphosphate kinase (151 aa).

ATP-binding residues include lysine 11, phenylalanine 59, arginine 87, threonine 93, arginine 104, and asparagine 114. Histidine 117 functions as the Pros-phosphohistidine intermediate in the catalytic mechanism.

This sequence belongs to the NDK family. Mg(2+) is required as a cofactor.

It catalyses the reaction a 2'-deoxyribonucleoside 5'-diphosphate + ATP = a 2'-deoxyribonucleoside 5'-triphosphate + ADP. It carries out the reaction a ribonucleoside 5'-diphosphate + ATP = a ribonucleoside 5'-triphosphate + ADP. Its function is as follows. Major role in the synthesis of nucleoside triphosphates other than ATP. The ATP gamma phosphate is transferred to the NDP beta phosphate via a ping-pong mechanism, using a phosphorylated active-site intermediate. The sequence is that of Nucleoside diphosphate kinase (NDK1) from Eremothecium gossypii (strain ATCC 10895 / CBS 109.51 / FGSC 9923 / NRRL Y-1056) (Yeast).